The primary structure comprises 252 residues: Neurexophilin-3 (252 aa).

The first 22 residues, 1 to 22 (MQLTRCCFVFLVQGSLYLVICG), serve as a signal peptide directing secretion. An II region spans residues 23–75 (QDDGPPGSEDPERDDHEGQPRPRVPRKRGHISPKSRPMANSTLLGLLAPPGEA). Residues 27-58 (PPGSEDPERDDHEGQPRPRVPRKRGHISPKSR) form a disordered region. A compositionally biased stretch (basic residues) spans 45–55 (RVPRKRGHISP). N-linked (GlcNAc...) asparagine glycosylation is found at Asn-62, Asn-127, Asn-137, and Asn-143. An III region spans residues 76-157 (WGILGQPPNR…LVPPSKAVEF (82 aa)). The segment at 158-166 (HQEQQIFIE) is IV (linker domain). Residues 167–252 (AKASKIFNCR…HSDTPYYPSG (86 aa)) are v (Cys-rich).

It belongs to the neurexophilin family. Post-translationally, may be proteolytically processed at the boundary between the N-terminal non-conserved and the central conserved domain in neuron-like cells. As to expression, highest level in brain.

It is found in the secreted. In terms of biological role, may be signaling molecules that resemble neuropeptides. Ligand for alpha-neurexins. This is Neurexophilin-3 (NXPH3) from Homo sapiens (Human).